Here is a 59-residue protein sequence, read N- to C-terminus: Large ribosomal subunit protein eL37 (59 aa).

4 residues coordinate Zn(2+): Cys-20, Cys-23, Cys-35, and Cys-38. The segment at 20 to 38 adopts a C4-type zinc-finger fold; sequence CRRCGRHSFHRRKGYCAAC.

This sequence belongs to the eukaryotic ribosomal protein eL37 family. Zn(2+) serves as cofactor.

Functionally, binds to the 23S rRNA. In Archaeoglobus fulgidus (strain ATCC 49558 / DSM 4304 / JCM 9628 / NBRC 100126 / VC-16), this protein is Large ribosomal subunit protein eL37 (rpl37e).